Consider the following 118-residue polypeptide: Small ribosomal subunit protein uS10 (118 aa).

S37 bears the Phosphoserine mark.

This sequence belongs to the universal ribosomal protein uS10 family. In terms of assembly, component of the small ribosomal subunit (SSU). Mature yeast ribosomes consist of a small (40S) and a large (60S) subunit. The 40S small subunit contains 1 molecule of ribosomal RNA (18S rRNA) and at least 33 different proteins. The large 60S subunit contains 3 rRNA molecules (25S, 5.8S and 5S rRNA) and at least 46 different proteins.

It is found in the cytoplasm. Its function is as follows. Component of the ribosome, a large ribonucleoprotein complex responsible for the synthesis of proteins in the cell. The small ribosomal subunit (SSU) binds messenger RNAs (mRNAs) and translates the encoded message by selecting cognate aminoacyl-transfer RNA (tRNA) molecules. The large subunit (LSU) contains the ribosomal catalytic site termed the peptidyl transferase center (PTC), which catalyzes the formation of peptide bonds, thereby polymerizing the amino acids delivered by tRNAs into a polypeptide chain. The nascent polypeptides leave the ribosome through a tunnel in the LSU and interact with protein factors that function in enzymatic processing, targeting, and the membrane insertion of nascent chains at the exit of the ribosomal tunnel. The sequence is that of Small ribosomal subunit protein uS10 (rps20) from Schizosaccharomyces pombe (strain 972 / ATCC 24843) (Fission yeast).